The sequence spans 63 residues: Large ribosomal subunit protein uL29 (63 aa).

This sequence belongs to the universal ribosomal protein uL29 family.

This is Large ribosomal subunit protein uL29 from Klebsiella pneumoniae (strain 342).